The primary structure comprises 260 residues: MGSLTSVDKSRIRQAFQKALNDYDRHALIQQKMTINLMAHLQDYLPNGSLDSVLELGCGSGMLSSLLQKQISADYWLFNDLCDVQTQLAEKLPQSFDFYCGDAEHFLFLQQFDLIASASAVQWFHQPDAFIAHCKTGLKTNGLLAVATFGEDNLKEVRQITNIGLNYPTLSQWQTWLAKDFELLWCEDFKVILDFDTPLDVLKHLKYTGVTATNQKNWTRKNLNGFIGDYLSAFGMPSGKVRLTYHPLFFIARYSHIENQ.

The protein belongs to the methyltransferase superfamily.

The catalysed reaction is malonyl-[ACP] + S-adenosyl-L-methionine = malonyl-[ACP] methyl ester + S-adenosyl-L-homocysteine. Its pathway is cofactor biosynthesis; biotin biosynthesis. Functionally, converts the free carboxyl group of a malonyl-thioester to its methyl ester by transfer of a methyl group from S-adenosyl-L-methionine (SAM). It allows to synthesize pimeloyl-ACP via the fatty acid synthetic pathway. This chain is Malonyl-[acyl-carrier protein] O-methyltransferase, found in Haemophilus influenzae (strain ATCC 51907 / DSM 11121 / KW20 / Rd).